The primary structure comprises 351 residues: MVSTLDDTKRNAIAEKLADAKLLQELIIENQERFLRESTDNEISNRIRDFLEDDRKNLGIIETVIVQYGIQKEPRQTVREMVDQVRQLMQGSQLNFFEKVAQHELLKHKQVMSGLLVHKAAQKVGADVLAAIGPLNTVNFENRAHQEQLKGILEILGVRELTGQDADQGIWGRVQDAIAAFSGAVGSAVTQGSDKQDMNIQDVIRMDHNKVNILFTELQQSNDPQKIQEYFGQIYKDLTAHAEAEEEVLYPRVRSFYGEGDTQELYDEQSEMKRLLEQIKAISPSAPEFKDRVRQLADIVMDHVRQEESTLFAAIRNNLSSEQTEQWATEFKAAKSKIQQRLGGQATGAGV.

Fe cation contacts are provided by His241, Glu245, and His303.

Its function is as follows. Acts as a DNA nickase. The polypeptide is DNA nickase (Nostoc sp. (strain PCC 7120 / SAG 25.82 / UTEX 2576)).